The chain runs to 461 residues: MTLPGGPTGMARPGGARPCSPGLERAPRRSVGELRLLFEARCAAVAAAAAAGEPRARGAKRRGGQVPNGLPRAPPAPVIPQLTVTAEEPDVPPTSPGPPERERDCLPAAGSSHLQQPRRLSTSSVSSTGSSSLLEDSEDDLLSDSESRSRGNVQLEAGEDVGQKNHWQKIRTMVNLPVISPFKKRYAWVQLAGHTGSFKAAGTSGLILKRCSEPERYCLARLMADALRGCVPAFHGVVERDGESYLQLQDLLDGFDGPCVLDCKMGVRTYLEEELTKARERPKLRKDMYKKMLAVDPEAPTEEEHAQRAVTKPRYMQWREGISSSTTLGFRIEGIKKADGSCSTDFKTTRSREQVLRVFEEFVQGDEEVLRRYLNRLQQIRDTLEVSEFFRRHEVIGSSLLFVHDHCHRAGVWLIDFGKTTPLPDGQILDHRRPWEEGNREDGYLLGLDNLIGILASLAER.

Residues 1-29 (MTLPGGPTGMARPGGARPCSPGLERAPRR) are disordered. The segment at 1-133 (MTLPGGPTGM…SVSSTGSSSL (133 aa)) is required for cytoskeleton location. Arg35, Arg55, and Arg62 each carry omega-N-methylarginine. The interval 49-160 (AAAGEPRARG…GNVQLEAGED (112 aa)) is disordered. The segment covering 118 to 134 (RRLSTSSVSSTGSSSLL) has biased composition (low complexity). Phosphoserine is present on residues Ser137 and Ser197. ATP is bound by residues Ser197, Lys209, 249 to 251 (QDL), and Asp262. Lys264 and Arg285 together coordinate substrate. Residues 287–295 (DMYKKMLAV) form a calmodulin-binding region. Position 312–319 (312–319 (KPRYMQWR)) interacts with substrate. Residues Lys336 and Asp416 each coordinate ATP. Substrate is bound at residue Lys419.

It belongs to the inositol phosphokinase (IPK) family. Expressed in brain.

The protein localises to the cytoplasm. It localises to the cytoskeleton. It catalyses the reaction 1D-myo-inositol 1,4,5-trisphosphate + ATP = 1D-myo-inositol 1,3,4,5-tetrakisphosphate + ADP + H(+). With respect to regulation, activated by calcium/calmodulin. Functionally, catalyzes the phosphorylation of 1D-myo-inositol 1,4,5-trisphosphate (InsP3) into 1D-myo-inositol 1,3,4,5-tetrakisphosphate and participates to the regulation of calcium homeostasis. This Homo sapiens (Human) protein is Inositol-trisphosphate 3-kinase A.